Reading from the N-terminus, the 405-residue chain is Imidazolonepropionase (405 aa).

2 residues coordinate Fe(3+): His73 and His75. 2 residues coordinate Zn(2+): His73 and His75. 4-imidazolone-5-propanoate-binding residues include Arg82, Tyr145, and His178. Tyr145 lines the N-formimidoyl-L-glutamate pocket. His243 provides a ligand contact to Fe(3+). A Zn(2+)-binding site is contributed by His243. Position 246 (Gln246) interacts with 4-imidazolone-5-propanoate. A Fe(3+)-binding site is contributed by Asp318. Residue Asp318 participates in Zn(2+) binding. 2 residues coordinate N-formimidoyl-L-glutamate: Asn320 and Gly322. Position 323 (Thr323) interacts with 4-imidazolone-5-propanoate.

Belongs to the metallo-dependent hydrolases superfamily. HutI family. Zn(2+) serves as cofactor. Requires Fe(3+) as cofactor.

It localises to the cytoplasm. The enzyme catalyses 4-imidazolone-5-propanoate + H2O = N-formimidoyl-L-glutamate. It functions in the pathway amino-acid degradation; L-histidine degradation into L-glutamate; N-formimidoyl-L-glutamate from L-histidine: step 3/3. Catalyzes the hydrolytic cleavage of the carbon-nitrogen bond in imidazolone-5-propanoate to yield N-formimidoyl-L-glutamate. It is the third step in the universal histidine degradation pathway. The polypeptide is Imidazolonepropionase (Brucella anthropi (strain ATCC 49188 / DSM 6882 / CCUG 24695 / JCM 21032 / LMG 3331 / NBRC 15819 / NCTC 12168 / Alc 37) (Ochrobactrum anthropi)).